Here is a 335-residue protein sequence, read N- to C-terminus: DNA polymerase beta (335 aa).

K41 participates in a covalent cross-link: Glycyl lysine isopeptide (Lys-Gly) (interchain with G-Cter in ubiquitin). A K(+)-binding site is contributed by K60. K60 serves as a coordination point for Na(+). A Glycyl lysine isopeptide (Lys-Gly) (interchain with G-Cter in ubiquitin) cross-link involves residue K61. K(+) is bound by residues L62 and V65. Na(+) is bound by residues L62 and V65. The active-site Nucleophile; Schiff-base intermediate with DNA; for 5'-dRP lyase activity is the K72. K72 bears the N6-acetyllysine mark. A Glycyl lysine isopeptide (Lys-Gly) (interchain with G-Cter in ubiquitin) cross-link involves residue K81. Position 83 is an omega-N-methylarginine; by PRMT6 (R83). Residues T101, V103, and I106 each contribute to the K(+) site. Na(+) is bound by residues T101, V103, and I106. R149 serves as a coordination point for dATP. R149 lines the dCTP pocket. R149 contributes to the dGTP binding site. R149 serves as a coordination point for dTTP. R152 bears the Omega-N-methylarginine; by PRMT6 mark. S180, R183, G189, and D190 together coordinate dATP. DCTP is bound by residues S180, R183, G189, and D190. DGTP contacts are provided by S180, R183, G189, D190, and D192. 4 residues coordinate dTTP: S180, R183, G189, and D190. The segment at 183–192 (RGAESSGDMD) is DNA-binding. 3 residues coordinate Mg(2+): D190, D192, and D256.

It belongs to the DNA polymerase type-X family. Monomer. Binds single-stranded DNA (ssDNA). Interacts with APEX1, LIG1, LIG3, FEN1, PCNA and XRCC1. Interacts with HUWE1/ARF-BP1, STUB1/CHIP and USP47. Interacts with FAM168A. Mg(2+) is required as a cofactor. Methylation by PRMT6 stimulates the polymerase activity by enhancing DNA binding and processivity. In terms of processing, ubiquitinated at Lys-41, Lys-61 and Lys-81: monoubiquitinated by HUWE1/ARF-BP1. Monoubiquitinated protein is then the target of STUB1/CHIP, which catalyzes polyubiquitination from monoubiquitin, leading to degradation by the proteasome. USP47 mediates the deubiquitination of monoubiquitinated protein, preventing polyubiquitination by STUB1/CHIP and its subsequent degradation.

The protein localises to the nucleus. It is found in the cytoplasm. It catalyses the reaction DNA(n) + a 2'-deoxyribonucleoside 5'-triphosphate = DNA(n+1) + diphosphate. The catalysed reaction is a 5'-end 2'-deoxyribose-2'-deoxyribonucleotide-DNA = (2E,4S)-4-hydroxypenten-2-al-5-phosphate + a 5'-end 5'-phospho-2'-deoxyribonucleoside-DNA + H(+). It carries out the reaction 2'-deoxyribonucleotide-(2'-deoxyribose 5'-phosphate)-2'-deoxyribonucleotide-DNA = a 3'-end 2'-deoxyribonucleotide-(2,3-dehydro-2,3-deoxyribose 5'-phosphate)-DNA + a 5'-end 5'-phospho-2'-deoxyribonucleoside-DNA + H(+). Its function is as follows. Repair polymerase that plays a key role in base-excision repair. During this process, the damaged base is excised by specific DNA glycosylases, the DNA backbone is nicked at the abasic site by an apurinic/apyrimidic (AP) endonuclease, and POLB removes 5'-deoxyribose-phosphate from the preincised AP site acting as a 5'-deoxyribose-phosphate lyase (5'-dRP lyase); through its DNA polymerase activity, it adds one nucleotide to the 3' end of the arising single-nucleotide gap. Conducts 'gap-filling' DNA synthesis in a stepwise distributive fashion rather than in a processive fashion as for other DNA polymerases. It is also able to cleave sugar-phosphate bonds 3' to an intact AP site, acting as an AP lyase. The chain is DNA polymerase beta (POLB) from Homo sapiens (Human).